The following is a 384-amino-acid chain: Neuropeptide Y receptor type 2 (384 aa).

Over 1–54 the chain is Extracellular; it reads MKMGPLGAEADENQTVEEMKVDQFGPGHTTLPGELAPDSEPELIDSTKLIEVQV. Residue asparagine 13 is glycosylated (N-linked (GlcNAc...) asparagine). Residues 55 to 75 form a helical membrane-spanning segment; it reads VLILAYCSIILLGVIGNSLVI. The Cytoplasmic portion of the chain corresponds to 76–89; that stretch reads HVVIKFKSMRTVTN. A helical transmembrane segment spans residues 90 to 110; it reads FFIANLAVADLLVNTLCLPFT. The Extracellular portion of the chain corresponds to 111-127; that stretch reads LTYTLMGEWKMGPVLCH. A disulfide bridge connects residues cysteine 126 and cysteine 206. The chain crosses the membrane as a helical span at residues 128–148; that stretch reads LVPYAQGLAVQVSTITLTVIA. At 149–168 the chain is on the cytoplasmic side; that stretch reads LDRHRCIVYHLESKISKQIS. A helical transmembrane segment spans residues 169-189; that stretch reads FLIIGLAWGVSALLASPLAIF. Residues 190–219 lie on the Extracellular side of the membrane; that stretch reads REYSLIEIIPDFEIVACTEKWPGEEKGIYG. The helical transmembrane segment at 220–240 threads the bilayer; that stretch reads TIYSLSSLLILYVLPLGIISF. Topologically, residues 241–271 are cytoplasmic; it reads SYTRIWSKLKNHVSPGAAHDHYHQRRQKTTK. The helical transmembrane segment at 272–292 threads the bilayer; it reads MLVCVVVVFAVSWLPLHAFQL. Residues 293–307 lie on the Extracellular side of the membrane; that stretch reads AVDIDSHVLDLKEYK. The helical transmembrane segment at 308–328 threads the bilayer; the sequence is LIFTVFHIIAMCSTFANPLLY. Topologically, residues 329 to 384 are cytoplasmic; the sequence is GWMNSNYRKAFLSAFRCEQRLDAIHSEVSVTFKAKKHLQVTKNNGPNDSFTETTNV. A lipid anchor (S-palmitoyl cysteine) is attached at cysteine 345.

Belongs to the G-protein coupled receptor 1 family.

It is found in the cell membrane. Its function is as follows. Receptor for neuropeptide Y and peptide YY. The chain is Neuropeptide Y receptor type 2 (NPY2R) from Bos taurus (Bovine).